The chain runs to 1487 residues: Chromosome partition protein MukB (1487 aa).

ATP is bound at residue 34–41 (GGNGAGKS). Coiled coils occupy residues 297-458 (GSRE…TNAL), 506-601 (RESQ…LEAI), 637-666 (LEQEKELSLAKDKLAERRSQLESEIERLAS), 781-806 (RAAREQRLELLRNEREEVVEKHAKAA), 836-1109 (EQAL…ELRT), and 1210-1266 (VEAI…LSNI). Residues 667–784 (PGGSNDPRLK…EIPLFGRAAR (118 aa)) form a flexible hinge region.

This sequence belongs to the SMC family. MukB subfamily. As to quaternary structure, homodimerization via its hinge domain. Binds to DNA via its C-terminal region. Interacts, and probably forms a ternary complex, with MukE and MukF via its C-terminal region. The complex formation is stimulated by calcium or magnesium. Interacts with tubulin-related protein FtsZ.

Its subcellular location is the cytoplasm. It localises to the nucleoid. In terms of biological role, plays a central role in chromosome condensation, segregation and cell cycle progression. Functions as a homodimer, which is essential for chromosome partition. Involved in negative DNA supercoiling in vivo, and by this means organize and compact chromosomes. May achieve or facilitate chromosome segregation by condensation DNA from both sides of a centrally located replisome during cell division. This chain is Chromosome partition protein MukB, found in Vibrio parahaemolyticus serotype O3:K6 (strain RIMD 2210633).